We begin with the raw amino-acid sequence, 400 residues long: LIM homeobox transcription factor 1-beta.1 (400 aa).

LIM zinc-binding domains are found at residues 54 to 113 and 114 to 175; these read AVCE…LFAA and KCSG…EKDL. The interval 175–228 is disordered; the sequence is LLSSGSPDDSDSVKSDDEEGDVKPGKGRVNQGKGSDDGKDPRRPKRPRTILTTQ. The homeobox DNA-binding region spans 218 to 277; sequence PKRPRTILTTQQRRAFKASFEVSSKPCRKVRETLAAETGLSVRVVQVWFQNQRAKIKKLA.

As to expression, shows a temporal expression pattern in three main areas: neural, kidney and limbs. From stage 13 onwards, expressed in regions of the nervous system including the placodes and otic vesicles, eye, specific sets of neurons, and in discreet regions of the neural tube. From stage 13, also expressed in the presumptive pronephros, and from stage 27 expression is predominant in the capsule of the pronephric glomus. Also expressed in the developing forelimbs and hindlimbs. In metamorphosing tadpoles, expressed in the eye, brain, muscle and mesonephric kidney.

Its subcellular location is the nucleus. Its function is as follows. Required for early specification of the kidney glomus, lying upstream of wt1 in the pathway controlling glomus differentiation. The balance in levels and expression patterns of binding partners such as lhx1/lim-1 influences differentiation into glomus or tubule derivatives. Involved in specification of serotonergic neurons. The sequence is that of LIM homeobox transcription factor 1-beta.1 from Xenopus laevis (African clawed frog).